A 430-amino-acid polypeptide reads, in one-letter code: Sorting nexin-4 (430 aa).

Over residues 1–18 (MDSASADASVTGSGNAKG) the composition is skewed to polar residues. The interval 1-22 (MDSASADASVTGSGNAKGSSAE) is disordered. One can recognise a PX domain in the interval 33–162 (LEILVSDPQK…IFLVGNEWDT (130 aa)). Arginine 83, lysine 109, and arginine 128 together coordinate a 1,2-diacyl-sn-glycero-3-phospho-(1D-myo-inositol-3-phosphate). Positions 351–414 (ASRRDKINKL…NNLADENIKF (64 aa)) form a coiled coil.

Belongs to the sorting nexin family.

It localises to the cytoplasm. The protein localises to the cytosol. The protein resides in the preautophagosomal structure membrane. Its subcellular location is the endosome membrane. Sorting nexin, involved in the separation or division of vacuoles throughout the entire life cycle of the cells. Involved in retrieval of late-Golgi SNAREs from post-Golgi endosomes to the trans-Golgi network, for cytoplasm to vacuole transport (Cvt), and autophagy of large cargos including mitophagy, pexophagy and glycophagy. The protein is Sorting nexin-4 (SNX4) of Candida glabrata (strain ATCC 2001 / BCRC 20586 / JCM 3761 / NBRC 0622 / NRRL Y-65 / CBS 138) (Yeast).